Here is a 292-residue protein sequence, read N- to C-terminus: Probable starch degradation products transport system permease protein AmyD (292 aa).

The next 6 membrane-spanning stretches (helical) occupy residues 15-35 (WLFIAPTLLSLIIVVLIPFII), 77-97 (FAVACIVIINVVGLSLAMLVT), 110-130 (FYLPNLIGGLILGFIWNFIFV), 156-176 (FWGLVIVTSWQMIGYVMVIYI), 205-225 (VFPLIAPAFTVSLFITLSNSF), and 260-280 (MAVGQAKAVIMFLIIAVISVI). The region spanning 71–281 (IIFTAKFAVA…LIIAVISVIQ (211 aa)) is the ABC transmembrane type-1 domain.

This sequence belongs to the binding-protein-dependent transport system permease family. MalFG subfamily.

It is found in the cell membrane. Functionally, probably part of a binding-protein-dependent transport system starch degradation products. Probably responsible for the translocation of the substrate across the membrane. This Thermoanaerobacterium thermosulfurigenes (Clostridium thermosulfurogenes) protein is Probable starch degradation products transport system permease protein AmyD (amyD).